A 360-amino-acid polypeptide reads, in one-letter code: 3-isopropylmalate dehydrogenase (360 aa).

Gly76–Glu89 provides a ligand contact to NAD(+). 4 residues coordinate substrate: Arg96, Arg106, Arg134, and Asp224. Positions 224, 248, and 252 each coordinate Mg(2+). Residue Gly282–Asn294 participates in NAD(+) binding.

The protein belongs to the isocitrate and isopropylmalate dehydrogenases family. LeuB type 1 subfamily. As to quaternary structure, homodimer. Requires Mg(2+) as cofactor. Mn(2+) serves as cofactor.

It localises to the cytoplasm. The enzyme catalyses (2R,3S)-3-isopropylmalate + NAD(+) = 4-methyl-2-oxopentanoate + CO2 + NADH. The protein operates within amino-acid biosynthesis; L-leucine biosynthesis; L-leucine from 3-methyl-2-oxobutanoate: step 3/4. Its function is as follows. Catalyzes the oxidation of 3-carboxy-2-hydroxy-4-methylpentanoate (3-isopropylmalate) to 3-carboxy-4-methyl-2-oxopentanoate. The product decarboxylates to 4-methyl-2 oxopentanoate. This Pseudomonas fluorescens (strain Pf0-1) protein is 3-isopropylmalate dehydrogenase.